Reading from the N-terminus, the 95-residue chain is Microcin E492 immunity protein (95 aa).

3 helical membrane passes run 1-21, 35-55, and 67-87; these read MTLLSFGFSPVFFSVMAFCII, VIVLILLTFFICFLYPLTKVY, and YLFCFISTLIAIAINVVILTI.

It belongs to the MceB microcin immunity protein family.

The protein resides in the cell inner membrane. Protect the producing cell against microcin E492. This chain is Microcin E492 immunity protein, found in Klebsiella pneumoniae.